The following is a 275-amino-acid chain: Nitrogenase iron protein 1 (275 aa).

G9–S16 serves as a coordination point for ATP. [4Fe-4S] cluster is bound at residue C97. ADP-ribosylarginine; by dinitrogenase reductase ADP-ribosyltransferase is present on R100. C132 is a [4Fe-4S] cluster binding site.

The protein belongs to the NifH/BchL/ChlL family. As to quaternary structure, homodimer. [4Fe-4S] cluster is required as a cofactor. The reversible ADP-ribosylation of Arg-100 inactivates the nitrogenase reductase and regulates nitrogenase activity.

The catalysed reaction is N2 + 8 reduced [2Fe-2S]-[ferredoxin] + 16 ATP + 16 H2O = H2 + 8 oxidized [2Fe-2S]-[ferredoxin] + 2 NH4(+) + 16 ADP + 16 phosphate + 6 H(+). In terms of biological role, the key enzymatic reactions in nitrogen fixation are catalyzed by the nitrogenase complex, which has 2 components: the iron protein and the molybdenum-iron protein. In Methanothermobacter marburgensis (strain ATCC BAA-927 / DSM 2133 / JCM 14651 / NBRC 100331 / OCM 82 / Marburg) (Methanobacterium thermoautotrophicum), this protein is Nitrogenase iron protein 1 (nifH1).